The following is a 139-amino-acid chain: Large ribosomal subunit protein uL16 (139 aa).

Positions 74–94 (LTKKPAETRQGSGKGSPESWV) are disordered.

The protein belongs to the universal ribosomal protein uL16 family. Part of the 50S ribosomal subunit.

Functionally, binds 23S rRNA and is also seen to make contacts with the A and possibly P site tRNAs. The chain is Large ribosomal subunit protein uL16 from Saccharopolyspora erythraea (strain ATCC 11635 / DSM 40517 / JCM 4748 / NBRC 13426 / NCIMB 8594 / NRRL 2338).